Reading from the N-terminus, the 783-residue chain is Cyclic di-GMP phosphodiesterase NbdA (783 aa).

An MHYT domain is found at tyrosine 81–serine 274. A run of 7 helical transmembrane segments spans residues serine 84 to valine 104, isoleucine 120 to phenylalanine 140, leucine 150 to methionine 170, phenylalanine 176 to histidine 196, leucine 215 to proline 235, leucine 255 to valine 275, and leucine 292 to tryptophan 312. Residues serine 313 to alanine 783 are Cytoplasmic-facing. The GGDEF domain maps to lysine 375–arginine 507. The region spanning glutamate 516–arginine 770 is the EAL domain. 3',3'-c-di-GMP-binding residues include glutamine 537, glutamate 551, arginine 555, asparagine 610, and asparagine 615. Glutamate 551 contacts Mg(2+). Mg(2+) is bound at residue asparagine 610. Mg(2+) contacts are provided by glutamate 642, aspartate 672, and aspartate 673. Residue aspartate 672 coordinates 3',3'-c-di-GMP. Arginine 696 provides a ligand contact to 3',3'-c-di-GMP. Glutamate 729 contributes to the Mg(2+) binding site. 3',3'-c-di-GMP contacts are provided by glutamate 732 and tyrosine 751.

Mg(2+) is required as a cofactor.

Its subcellular location is the cell inner membrane. The catalysed reaction is 3',3'-c-di-GMP + H2O = 5'-phosphoguanylyl(3'-&gt;5')guanosine + H(+). Its activity is regulated as follows. PDE activity is stimulated by GTP. It could also be stimulated by NO. Displays c-di-GMP-specific phosphodiesterase (PDE) activity. Seems to play a specific role in nitric oxide (NO)-induced biofilm dispersion. Enhanced NbdA synthesis in the presence of NO increases PDE activity, leading to reduced cellular c-di-GMP levels and biofilm dispersion. Does not show diguanylate cyclase (DGC) activity. This is Cyclic di-GMP phosphodiesterase NbdA from Pseudomonas aeruginosa (strain ATCC 15692 / DSM 22644 / CIP 104116 / JCM 14847 / LMG 12228 / 1C / PRS 101 / PAO1).